The sequence spans 387 residues: Phosphoglycerate kinase (387 aa).

Substrate is bound by residues 21 to 23, arginine 36, and 59 to 62; these read DLN and HLGR. At lysine 84 the chain carries N6-acetyllysine. Substrate is bound by residues arginine 113 and arginine 146. Residues lysine 197, glutamate 314, and 340 to 343 contribute to the ATP site; that span reads GGDT.

The protein belongs to the phosphoglycerate kinase family. Monomer.

The protein localises to the cytoplasm. The catalysed reaction is (2R)-3-phosphoglycerate + ATP = (2R)-3-phospho-glyceroyl phosphate + ADP. Its pathway is carbohydrate degradation; glycolysis; pyruvate from D-glyceraldehyde 3-phosphate: step 2/5. The chain is Phosphoglycerate kinase from Shigella sonnei (strain Ss046).